Reading from the N-terminus, the 340-residue chain is MLHTIGILIWIIIKILVIVVPLLISVAYLTYAERKVIGYIQVRIGPNRVGLKGLLQPFADLLKLITKEIIVPTRSNKYLFVIAPLFALVPSLVGWAVIPFQEGVVLANINAGVLYLFAMSSLGVYGVLIAGWASNSKYAMFGALRSTAQTVSYEIAMGFALVGVLLAAGSMNLTDIVNSQKGGMLHWWFIPLLPLFLVFWIAGIAETNRAPFDLAEGESEIVAGFHVEYSGIGFALFFLSEYASMILISTFMAILFMGGWLSPFEGITFLDQIFFVVPGFVWLLLKISFFLFVYLWVRATFPRYRYDQLMRLGWKVLIPVTIVWLIVTSLMVVAHVKPWF.

A run of 8 helical transmembrane segments spans residues 4–24 (TIGILIWIIIKILVIVVPLLI), 78–98 (YLFVIAPLFALVPSLVGWAVI), 113–133 (VLYLFAMSSLGVYGVLIAGWA), 151–171 (VSYEIAMGFALVGVLLAAGSM), 184–204 (MLHWWFIPLLPLFLVFWIAGI), 244–264 (SMILISTFMAILFMGGWLSPF), 273–293 (IFFVVPGFVWLLLKISFFLFV), and 316–336 (VLIPVTIVWLIVTSLMVVAHV).

The protein belongs to the complex I subunit 1 family. NDH-1 is composed of 14 different subunits. Subunits NuoA, H, J, K, L, M, N constitute the membrane sector of the complex.

It localises to the cell inner membrane. It carries out the reaction a quinone + NADH + 5 H(+)(in) = a quinol + NAD(+) + 4 H(+)(out). Its function is as follows. NDH-1 shuttles electrons from NADH, via FMN and iron-sulfur (Fe-S) centers, to quinones in the respiratory chain. The immediate electron acceptor for the enzyme in this species is believed to be ubiquinone. Couples the redox reaction to proton translocation (for every two electrons transferred, four hydrogen ions are translocated across the cytoplasmic membrane), and thus conserves the redox energy in a proton gradient. This subunit may bind ubiquinone. The sequence is that of NADH-quinone oxidoreductase subunit H from Legionella pneumophila (strain Corby).